A 338-amino-acid polypeptide reads, in one-letter code: Galactinol synthase 2 (338 aa).

K105 is a catalytic residue. 3 residues coordinate Mn(2+): D121, D123, and H258.

This sequence belongs to the glycosyltransferase 8 family. Galactosyltransferase subfamily. It depends on a divalent metal cation as a cofactor.

It localises to the cytoplasm. The catalysed reaction is myo-inositol + UDP-alpha-D-galactose = alpha-D-galactosyl-(1-&gt;3)-1D-myo-inositol + UDP + H(+). In terms of biological role, galactinol synthase involved in the biosynthesis of raffinose family oligosaccharides (RFOs) that function as osmoprotectants. May promote plant stress tolerance. The protein is Galactinol synthase 2 (GOLS2) of Solanum lycopersicum (Tomato).